The following is a 792-amino-acid chain: Putative cellulose synthase-like protein H3 (792 aa).

The next 2 helical transmembrane spans lie at 25–45 (AWMLANFVVLFLLLALLVRRA) and 55–75 (VGGAAWRVAFACEAWFAFVWL). The interval 132–154 (GRHVRDDGGPGARAAGGDGEQGA) is disordered. Over residues 140 to 151 (GPGARAAGGDGE) the composition is skewed to gly residues. Residues D181 and D501 contribute to the active site. 6 consecutive transmembrane segments (helical) span residues 579-599 (VWAVRGFVELCYELLVPYCLL), 613-632 (FNITLALFLTYNTYNFVEYM), 650-670 (IISASAWLLAFFTVLLKTIGL), 706-726 (VFIPVTALTMLNIVAITIGTW), 739-759 (GPGISEFMSCGWLLLCLLPFV), and 768-788 (YGIPWSVKLKASLLVALFLFC).

The protein belongs to the glycosyltransferase 2 family. Plant cellulose synthase-like H subfamily.

The protein localises to the golgi apparatus membrane. Functionally, thought to be a Golgi-localized beta-glycan synthase that polymerize the backbones of noncellulosic polysaccharides (hemicelluloses) of plant cell wall. The polypeptide is Putative cellulose synthase-like protein H3 (CSLH3) (Oryza sativa subsp. japonica (Rice)).